The chain runs to 777 residues: Aconitate hydratase, mitochondrial (777 aa).

Substrate-binding positions include Gln-96 and 189 to 191 (DSH). [4Fe-4S] cluster-binding residues include Cys-383, Cys-446, and Cys-449. Substrate is bound by residues Arg-472, Arg-477, Arg-605, and 668–669 (SR).

Belongs to the aconitase/IPM isomerase family. Monomer. The cofactor is [4Fe-4S] cluster.

The protein localises to the mitochondrion. The catalysed reaction is citrate = D-threo-isocitrate. It functions in the pathway carbohydrate metabolism; tricarboxylic acid cycle; isocitrate from oxaloacetate: step 2/2. Functionally, catalyzes the isomerization of citrate to isocitrate via cis-aconitate, a step in the citric acid cycle. In Candida albicans (strain SC5314 / ATCC MYA-2876) (Yeast), this protein is Aconitate hydratase, mitochondrial (ACO1).